A 137-amino-acid polypeptide reads, in one-letter code: Small ribosomal subunit protein uS9 (137 aa).

The disordered stretch occupies residues 100-137; sequence ENRPPLKSEGYLTRDPRAKERKKYGLHKARKAPQYSKR. Positions 118–137 are enriched in basic residues; that stretch reads KERKKYGLHKARKAPQYSKR.

This sequence belongs to the universal ribosomal protein uS9 family.

This chain is Small ribosomal subunit protein uS9, found in Microcystis aeruginosa (strain NIES-843 / IAM M-2473).